A 107-amino-acid chain; its full sequence is U1-lycotoxin-Ls1f (107 aa).

Residues 1-20 (MMKVLVVVALLVTLISYSSS) form the signal peptide. The propeptide occupies 21 to 41 (EGIDDLEADELLSLMANEQTR). Cystine bridges form between C44–C59, C51–C68, C58–C86, and C70–C84.

This sequence belongs to the neurotoxin 19 (CSTX) family. 04 (U1-Lctx) subfamily. Expressed by the venom gland.

It is found in the secreted. This Lycosa singoriensis (Wolf spider) protein is U1-lycotoxin-Ls1f.